A 367-amino-acid chain; its full sequence is DNA replication and repair protein RecF (367 aa).

Residue 30–37 (GANGSGKT) participates in ATP binding.

This sequence belongs to the RecF family.

It is found in the cytoplasm. Functionally, the RecF protein is involved in DNA metabolism; it is required for DNA replication and normal SOS inducibility. RecF binds preferentially to single-stranded, linear DNA. It also seems to bind ATP. The chain is DNA replication and repair protein RecF from Pseudomonas fluorescens (strain ATCC BAA-477 / NRRL B-23932 / Pf-5).